The following is a 323-amino-acid chain: Porphobilinogen deaminase (323 aa).

Cys-251 bears the S-(dipyrrolylmethanemethyl)cysteine mark.

It belongs to the HMBS family. As to quaternary structure, monomer. Dipyrromethane serves as cofactor.

The enzyme catalyses 4 porphobilinogen + H2O = hydroxymethylbilane + 4 NH4(+). It participates in porphyrin-containing compound metabolism; protoporphyrin-IX biosynthesis; coproporphyrinogen-III from 5-aminolevulinate: step 2/4. Its pathway is porphyrin-containing compound metabolism; chlorophyll biosynthesis. Functionally, tetrapolymerization of the monopyrrole PBG into the hydroxymethylbilane pre-uroporphyrinogen in several discrete steps. This chain is Porphobilinogen deaminase (hemC), found in Nostoc sp. (strain PCC 7120 / SAG 25.82 / UTEX 2576).